Reading from the N-terminus, the 247-residue chain is LOB domain-containing protein 38 (247 aa).

The region spanning 1 to 107 (MSCNGCRVLR…VETVLRGGSL (107 aa)) is the LOB domain. Positions 157–170 (FSSSRSRSRSTASP) are enriched in low complexity. Positions 157-184 (FSSSRSRSRSTASPPKRKRLSSEQQPSS) are disordered.

Belongs to the LOB domain-containing protein family. In terms of tissue distribution, expressed in young shoots, roots, stems, leaves and flowers.

This Arabidopsis thaliana (Mouse-ear cress) protein is LOB domain-containing protein 38 (LBD38).